Reading from the N-terminus, the 474-residue chain is PRAME family member 7 (474 aa).

One copy of the LRR 1; degenerate repeat lies at 97-122 (QSKLQVLDLRNVDENFCDIFSGATAS). The stretch at 177 to 201 (HVCCKELQVFGMPIHSIIEVLNMVE) is one LRR 2; degenerate repeat. The LRR 3; degenerate repeat unit spans residues 202-228 (LDCIQEVEVCCPWELSTLVKFAPYLGQ). The stretch at 229 to 264 (MRNLRKLVLFNIRASACIPPDNKGQFIARFTSQFLK) is one LRR 4; degenerate repeat. LRR repeat units lie at residues 265-290 (LDYF…LRCL), 291-322 (QASL…RQLK), 323-341 (ELDL…PLTG), 347-374 (VATL…VLSR), and 375-399 (CSQL…LLRH).

Belongs to the PRAME family.

This is PRAME family member 7 from Homo sapiens (Human).